The chain runs to 129 residues: N16.5 matrix protein (129 aa).

A signal peptide spans 1-23 (MTCTLRWTITALVLLGICHLARP). Repeat copies occupy residues 91–92 (NG), 93–94 (NG), 95–96 (NG), 97–98 (NG), and 99–100 (NG). The segment at 91-100 (NGNGNGNGNG) is 5 X 2 AA tandem repeats of N-G.

This sequence belongs to the N16 matrix protein family. As to quaternary structure, heterooligomer; disulfide-linked. Pif97, Pif80, N16 and other proteins form a complex. As to expression, component of conchiolin, the organic matrix of nacre. Specifically expressed in mantle epithelium.

Its subcellular location is the secreted. The protein resides in the extracellular space. The protein localises to the extracellular matrix. Functionally, may be specifically involved in the formation of the nacreous layer. The protein is N16.5 matrix protein of Pinctada fucata (Akoya pearl oyster).